The primary structure comprises 236 residues: Leucyl/phenylalanyl-tRNA--protein transferase (236 aa).

This sequence belongs to the L/F-transferase family.

It is found in the cytoplasm. The catalysed reaction is N-terminal L-lysyl-[protein] + L-leucyl-tRNA(Leu) = N-terminal L-leucyl-L-lysyl-[protein] + tRNA(Leu) + H(+). It catalyses the reaction N-terminal L-arginyl-[protein] + L-leucyl-tRNA(Leu) = N-terminal L-leucyl-L-arginyl-[protein] + tRNA(Leu) + H(+). It carries out the reaction L-phenylalanyl-tRNA(Phe) + an N-terminal L-alpha-aminoacyl-[protein] = an N-terminal L-phenylalanyl-L-alpha-aminoacyl-[protein] + tRNA(Phe). In terms of biological role, functions in the N-end rule pathway of protein degradation where it conjugates Leu, Phe and, less efficiently, Met from aminoacyl-tRNAs to the N-termini of proteins containing an N-terminal arginine or lysine. The chain is Leucyl/phenylalanyl-tRNA--protein transferase from Shewanella oneidensis (strain ATCC 700550 / JCM 31522 / CIP 106686 / LMG 19005 / NCIMB 14063 / MR-1).